A 252-amino-acid chain; its full sequence is Probable transcriptional regulatory protein Lxx10750 (252 aa).

It belongs to the TACO1 family.

The protein localises to the cytoplasm. The polypeptide is Probable transcriptional regulatory protein Lxx10750 (Leifsonia xyli subsp. xyli (strain CTCB07)).